The following is a 134-amino-acid chain: Small ribosomal subunit protein bS16 (134 aa).

Residues 79 to 134 are disordered; it reads AGIAKRPSRNNPTKGEPGKKAQERLALAKQAEEEAAAKAAEAAAAAAAPAEEAASE. Residues 115-134 are compositionally biased toward low complexity; that stretch reads AKAAEAAAAAAAPAEEAASE.

Belongs to the bacterial ribosomal protein bS16 family.

The chain is Small ribosomal subunit protein bS16 from Brucella canis (strain ATCC 23365 / NCTC 10854 / RM-666).